The sequence spans 333 residues: COMPASS-like H3K4 histone methylase component WDR5B (333 aa).

8 WD repeats span residues 1–40, 41–80, 83–122, 126–167, 169–207, 211–252, 253–295, and 298–333; these read MPSG…KTLE, GHTA…LIHR, GHSS…ECLK, GHTN…RMIK, HSMP…CLKT, DKSP…KVYT, GHTN…ILQR, and GHTD…KQDA.

In terms of assembly, unlike WDR5A, does not interact with RBL or TRO.

In Arabidopsis thaliana (Mouse-ear cress), this protein is COMPASS-like H3K4 histone methylase component WDR5B.